A 149-amino-acid chain; its full sequence is Large ribosomal subunit protein uL11 (149 aa).

The protein belongs to the universal ribosomal protein uL11 family. In terms of assembly, part of the ribosomal stalk of the 50S ribosomal subunit. Interacts with L10 and the large rRNA to form the base of the stalk. L10 forms an elongated spine to which L12 dimers bind in a sequential fashion forming a multimeric L10(L12)X complex. In terms of processing, one or more lysine residues are methylated.

Forms part of the ribosomal stalk which helps the ribosome interact with GTP-bound translation factors. The polypeptide is Large ribosomal subunit protein uL11 (Azorhizobium caulinodans (strain ATCC 43989 / DSM 5975 / JCM 20966 / LMG 6465 / NBRC 14845 / NCIMB 13405 / ORS 571)).